The primary structure comprises 300 residues: NADH-cytochrome b5 reductase 2 (300 aa).

A helical transmembrane segment spans residues 12–29 (FVYPLVGATIGSIGLAYY). Residues 49–153 (DQWIDLKLKK…KGPVVKWKWE (105 aa)) enclose the FAD-binding FR-type domain. An FAD-binding site is contributed by 156-191 (QFKSIALIGGGTGITPLYQLLREITSNPEDKTKVSL).

The protein belongs to the flavoprotein pyridine nucleotide cytochrome reductase family. It depends on FAD as a cofactor.

The protein localises to the mitochondrion outer membrane. The catalysed reaction is 2 Fe(III)-[cytochrome b5] + NADH = 2 Fe(II)-[cytochrome b5] + NAD(+) + H(+). In terms of biological role, may mediate the reduction of outer membrane cytochrome b5. The protein is NADH-cytochrome b5 reductase 2 (MCR1) of Lodderomyces elongisporus (strain ATCC 11503 / CBS 2605 / JCM 1781 / NBRC 1676 / NRRL YB-4239) (Yeast).